The sequence spans 316 residues: Cuticle collagen 12 (316 aa).

A signal peptide spans 1–36; sequence MTEDPKQIAQETESLRKVAFFGIAVSTIATLTAIIA. Composition is skewed to low complexity over residues 127 to 157 and 183 to 204; these read SGAA…PGQD and APGQ…GAAL. The disordered stretch occupies residues 127–316; it reads SGAAGPAGSP…CPPPRTAPGY (190 aa). Triple-helical region regions lie at residues 128 to 157, 176 to 202, 206 to 235, 240 to 266, and 269 to 304; these read GAAG…PGQD, GPPG…SGGA, GPPG…PGQV, GTPG…AGSS, and GGPG…EGAC. Over residues 205–217 the composition is skewed to pro residues; sequence PGPPGPAGPPGPA. The segment covering 219–234 has biased composition (low complexity); it reads QPGSNGNAGAPGAPGQ. Over residues 241 to 251 the composition is skewed to pro residues; it reads TPGPAGPPGSP. Composition is skewed to low complexity over residues 256-266 and 276-295; these read APGQPGQAGSS and DAGA…PGQD. The segment covering 307–316 has biased composition (pro residues); that stretch reads CPPPRTAPGY.

This sequence belongs to the cuticular collagen family. In terms of assembly, collagen polypeptide chains are complexed within the cuticle by disulfide bonds and other types of covalent cross-links.

In terms of biological role, nematode cuticles are composed largely of collagen-like proteins. The cuticle functions both as an exoskeleton and as a barrier to protect the worm from its environment. In Caenorhabditis elegans, this protein is Cuticle collagen 12 (col-12).